The primary structure comprises 240 residues: Tetrahydromethanopterin S-methyltransferase subunit A (240 aa).

At 1 to 216 (MADKKAPASG…DAALIAKFNS (216 aa)) the chain is on the cytoplasmic side. Residue His85 coordinates 5-hydroxybenzimidazolylcob(I)amide. A helical transmembrane segment spans residues 217-234 (GYYNGKIQGIAIGLFLSL). At 235–240 (LIFSLL) the chain is on the extracellular side.

Belongs to the MtrA family. The complex is composed of 8 subunits; MtrA, MtrB, MtrC, MtrD, MtrE, MtrF, MtrG and MtrH. The cofactor is 5-hydroxybenzimidazolylcob(I)amide.

It is found in the cell membrane. It carries out the reaction 5-methyl-5,6,7,8-tetrahydromethanopterin + coenzyme M + 2 Na(+)(in) = 5,6,7,8-tetrahydromethanopterin + methyl-coenzyme M + 2 Na(+)(out). Its pathway is one-carbon metabolism; methanogenesis from CO(2); methyl-coenzyme M from 5,10-methylene-5,6,7,8-tetrahydromethanopterin: step 2/2. Functionally, part of a complex that catalyzes the formation of methyl-coenzyme M and tetrahydromethanopterin from coenzyme M and methyl-tetrahydromethanopterin. This is an energy-conserving, sodium-ion translocating step. The chain is Tetrahydromethanopterin S-methyltransferase subunit A from Methanococcus aeolicus (strain ATCC BAA-1280 / DSM 17508 / OCM 812 / Nankai-3).